A 206-amino-acid chain; its full sequence is Small ribosomal subunit protein uS4 (206 aa).

The interval 18–44 (NIWGRPKSPVNRREYGPGQHGQRRKGK) is disordered. The 64-residue stretch at 94–157 (RRLDAVVYRA…KQLAVVLEAV (64 aa)) folds into the S4 RNA-binding domain.

Belongs to the universal ribosomal protein uS4 family. As to quaternary structure, part of the 30S ribosomal subunit. Contacts protein S5. The interaction surface between S4 and S5 is involved in control of translational fidelity.

In terms of biological role, one of the primary rRNA binding proteins, it binds directly to 16S rRNA where it nucleates assembly of the body of the 30S subunit. With S5 and S12 plays an important role in translational accuracy. The protein is Small ribosomal subunit protein uS4 of Jannaschia sp. (strain CCS1).